Reading from the N-terminus, the 270-residue chain is NAD(P)H-hydrate epimerase (270 aa).

The region spanning phenylalanine 25–glutamine 234 is the YjeF N-terminal domain. Aspartate 73–glutamine 77 lines the (6S)-NADPHX pocket. Residues asparagine 74 and aspartate 144 each coordinate K(+). Residues glycine 148–histidine 154 and glutamate 177 each bind (6S)-NADPHX. Threonine 180 provides a ligand contact to K(+).

Belongs to the NnrE/AIBP family. It depends on K(+) as a cofactor.

It catalyses the reaction (6R)-NADHX = (6S)-NADHX. The catalysed reaction is (6R)-NADPHX = (6S)-NADPHX. In terms of biological role, catalyzes the epimerization of the S- and R-forms of NAD(P)HX, a damaged form of NAD(P)H that is a result of enzymatic or heat-dependent hydration. This is a prerequisite for the S-specific NAD(P)H-hydrate dehydratase to allow the repair of both epimers of NAD(P)HX. This Legionella pneumophila serogroup 1 (strain 2300/99 Alcoy) protein is NAD(P)H-hydrate epimerase.